The primary structure comprises 231 residues: Ribosomal RNA large subunit methyltransferase E (231 aa).

Positions 76, 78, 99, 115, and 139 each coordinate S-adenosyl-L-methionine. K179 (proton acceptor) is an active-site residue.

This sequence belongs to the class I-like SAM-binding methyltransferase superfamily. RNA methyltransferase RlmE family.

It localises to the cytoplasm. The catalysed reaction is uridine(2552) in 23S rRNA + S-adenosyl-L-methionine = 2'-O-methyluridine(2552) in 23S rRNA + S-adenosyl-L-homocysteine + H(+). Functionally, specifically methylates the uridine in position 2552 of 23S rRNA at the 2'-O position of the ribose in the fully assembled 50S ribosomal subunit. This Bradyrhizobium sp. (strain ORS 278) protein is Ribosomal RNA large subunit methyltransferase E.